Consider the following 85-residue polypeptide: Large ribosomal subunit protein bL27 (85 aa).

It belongs to the bacterial ribosomal protein bL27 family.

In Campylobacter hominis (strain ATCC BAA-381 / DSM 21671 / CCUG 45161 / LMG 19568 / NCTC 13146 / CH001A), this protein is Large ribosomal subunit protein bL27.